A 99-amino-acid polypeptide reads, in one-letter code: Aspartyl/glutamyl-tRNA(Asn/Gln) amidotransferase subunit C (99 aa).

It belongs to the GatC family. Heterotrimer of A, B and C subunits.

It catalyses the reaction L-glutamyl-tRNA(Gln) + L-glutamine + ATP + H2O = L-glutaminyl-tRNA(Gln) + L-glutamate + ADP + phosphate + H(+). The catalysed reaction is L-aspartyl-tRNA(Asn) + L-glutamine + ATP + H2O = L-asparaginyl-tRNA(Asn) + L-glutamate + ADP + phosphate + 2 H(+). Allows the formation of correctly charged Asn-tRNA(Asn) or Gln-tRNA(Gln) through the transamidation of misacylated Asp-tRNA(Asn) or Glu-tRNA(Gln) in organisms which lack either or both of asparaginyl-tRNA or glutaminyl-tRNA synthetases. The reaction takes place in the presence of glutamine and ATP through an activated phospho-Asp-tRNA(Asn) or phospho-Glu-tRNA(Gln). The protein is Aspartyl/glutamyl-tRNA(Asn/Gln) amidotransferase subunit C of Paracidovorax citrulli (strain AAC00-1) (Acidovorax citrulli).